Reading from the N-terminus, the 161-residue chain is Nucleotide-binding protein Bcep18194_A5887 (161 aa).

This sequence belongs to the YajQ family.

Functionally, nucleotide-binding protein. In Burkholderia lata (strain ATCC 17760 / DSM 23089 / LMG 22485 / NCIMB 9086 / R18194 / 383), this protein is Nucleotide-binding protein Bcep18194_A5887.